Here is a 72-residue protein sequence, read N- to C-terminus: Pre-histone-like nucleoprotein (72 aa).

Serine 2 bears the N-acetylserine; by host mark. Positions serine 2–glycine 14 are excised as a propeptide.

Belongs to the adenoviridae histone-like nucleoprotein family. Interacts with the core-capsid bridging protein; this interaction bridges the virus core to the capsid. Post-translationally, cleaved near the N-terminus by the viral protease during virion maturation to form the mature protein.

The protein localises to the host nucleus. Its subcellular location is the host nucleolus. It localises to the virion. Strongly bound to viral DNA and responsible for wrapping and condensing the viral DNA. Probably promotes viral genome import into the nucleus and is still associated with the viral DNA when the latter enters into the host nucleus. The protein is Pre-histone-like nucleoprotein of Galliformes (FAdV-1).